Here is a 1173-residue protein sequence, read N- to C-terminus: MSSSLLWAVDIFGRVYTLSTVGQYWELCKDTQLEFKRVSAVKQCCWGIACDHQVYTYVFSGDVPIRYQEETYENQRWNPVGGFCEKLMPSDRWQWSDVSGLKHQQLDSFTLPSPHWEWESDWYVDENIGGEPTEKGGWTYAIDFPSTYTKDKKWNSCVRRRRWIRYRRYKSRDVWAKITSHDDPERLPDPFNDISIGGWEITDEPLGRLSVWAVSLQGRVWYRENVCHHNPEGSTWSLISTPGEVAQISCGSYDLLWATLWEGQAIVREGIDRNNPQGISWSTVESPSSDNGIMHVSVGVDVVWCITKDRKVWFRRGVNSHNPCGTSWIEMVGEMMMVNVGLNNQVWGIGCDDRTIYFRQGVTPSELSGKMWKAIVCGRESDRSQTGSSTSLLSAGCFFTDDIQNQTNTVIQGDADTSSDTELSSIPTNLSSTPPMGAAASSASSTGSQAAGAPASVTVDPLDSDQGEAPAASASDEKAHLESRKSTNPTPSTELQWTNIDLKEAHRHAVLSVSTFTETSSLSSLGMFSVGAEEQYGADEHPLWAWVSGGGCLVDLHSPLKWFAVPSGLSSSVQSLSLSITPAQTAAWRKQIFQQLSERTKRELENFRHYEQAVEQSVWVKTGMLQWWRNWKPHKWMDVRVALEQFTGSDGMRDSILFIYYMYHEEKKYIHVFLNEVTIIAEVLKEGKHSFALYTPERTKQRWPICLAATTEQEMHDWLSLLTMSCCESRRIQGPPSHHAIWSVSCKGDIFVSEPSPELEAEPHPMPCDQMFWRQVGGHLRLVECNNRGIVWGIGYDHTVWVYTGGYGGGFIQGLASSADNIYTQSDVKCVYIYENQRWNPVTGYSSRGLPTDRYMWSDASGLQECTKANTKPPSPQWSWVSDWYIDFSTSGGTDREGWQYAADFPASYHGHKTMKDFVRRRRWARKCKIVTNGPWLEVPPVTLWDISIIPSSDADDEESVALWAISDKGDVLCRLGVTQQNPAGTSWLHVGTDQPFVSISVGAFFQVWAVARDGSAFYRGSVSPKKPAGDCWYHIPSPQKQKLKQVSVGRTSVFVLDKNGNLWYRQGITPSYPQGSAWDHVSNNIRKMSVGPLDQVWVIADKVQGSHGLSCGTVCHRTGVQPMEPKGLAWDYGIGGGWEHVTVRGNASQAPRGTVPSESPPEPMESEGRVMC.

4 TECPR repeats span residues Ser-210 to Ile-239, Asp-254 to Glu-285, Asp-301 to Val-332, and Asn-344 to Val-376. The span at Gly-413–Leu-430 shows a compositional bias: polar residues. The disordered stretch occupies residues Gly-413–Leu-495. The segment covering Ser-431–Ser-456 has biased composition (low complexity). The segment covering Ser-475–Lys-485 has biased composition (basic and acidic residues). Positions Ser-486–Leu-495 are enriched in polar residues. Positions Val-618–Cys-727 constitute a PH domain. 5 TECPR repeats span residues His-739 to Met-766, Ala-962 to Val-991, Gln-1007 to Pro-1037, Ser-1053 to Ser-1083, and Asp-1095 to Ile-1135. Residues Asn-1147–Cys-1173 form a disordered region.

Belongs to the TECPR1 family.

It localises to the cytoplasmic vesicle. The protein localises to the autophagosome membrane. It is found in the lysosome membrane. Tethering factor involved in autophagy. Involved in autophagosome maturation by promoting the autophagosome fusion with lysosomes. Binds phosphatidylinositol-3-phosphate (PtdIns(3)P) present at the surface of autophagosomes. This Gallus gallus (Chicken) protein is Tectonin beta-propeller repeat-containing protein 1 (TECPR1).